Consider the following 289-residue polypeptide: Membrane protein insertase YidC (289 aa).

Positions 1-19 are cleaved as a signal peptide; sequence MKKKALLPLLLGIMVFLAG. Cysteine 20 carries N-palmitoyl cysteine lipidation. Cysteine 20 carries S-diacylglycerol cysteine lipidation. 5 helical membrane passes run 55 to 75, 133 to 153, 177 to 197, 210 to 230, and 231 to 251; these read YGLA…PFML, MLGC…FFVL, IWIT…STFS, MIIS…ALGL, and YWSV…AYYS. Positions 268 to 289 are disordered; sequence EHGGSGNSKGAKVVSKKNKKKK.

It belongs to the OXA1/ALB3/YidC family. Type 2 subfamily.

The protein localises to the cell membrane. Its function is as follows. Required for the insertion and/or proper folding and/or complex formation of integral membrane proteins into the membrane. Involved in integration of membrane proteins that insert both dependently and independently of the Sec translocase complex, as well as at least some lipoproteins. The protein is Membrane protein insertase YidC of Staphylococcus carnosus (strain TM300).